The primary structure comprises 23 residues: Brevinin-1Eb (23 aa).

A disulfide bond links C17 and C23.

This sequence belongs to the frog skin active peptide (FSAP) family. Brevinin subfamily. In terms of tissue distribution, expressed by the skin glands.

It is found in the secreted. Its function is as follows. Shows antibacterial activity against representative Gram-negative and Gram-positive bacterial species, and a very high hemolytic activity. The sequence is that of Brevinin-1Eb from Pelophylax lessonae (Pool frog).